We begin with the raw amino-acid sequence, 348 residues long: Xaa-Pro dipeptidase (348 aa).

Positions 209, 220, 284, 313, and 327 each coordinate Co(2+).

The protein belongs to the peptidase M24B family. Archaeal-type prolidase subfamily. Homodimer. The cofactor is Co(2+). Mn(2+) serves as cofactor.

It is found in the cytoplasm. The catalysed reaction is Xaa-L-Pro dipeptide + H2O = an L-alpha-amino acid + L-proline. Its function is as follows. Splits dipeptides with a prolyl in the C-terminal position and a nonpolar amino acid at the N-terminal position. This Pyrococcus furiosus (strain ATCC 43587 / DSM 3638 / JCM 8422 / Vc1) protein is Xaa-Pro dipeptidase (pepQ).